The following is a 421-amino-acid chain: 3-isopropylmalate dehydratase large subunit (421 aa).

Residues Cys302, Cys362, and Cys365 each contribute to the [4Fe-4S] cluster site.

Belongs to the aconitase/IPM isomerase family. LeuC type 2 subfamily. In terms of assembly, heterodimer of LeuC and LeuD. [4Fe-4S] cluster is required as a cofactor.

The enzyme catalyses (2R,3S)-3-isopropylmalate = (2S)-2-isopropylmalate. It participates in amino-acid biosynthesis; L-leucine biosynthesis; L-leucine from 3-methyl-2-oxobutanoate: step 2/4. Its function is as follows. Catalyzes the isomerization between 2-isopropylmalate and 3-isopropylmalate, via the formation of 2-isopropylmaleate. The chain is 3-isopropylmalate dehydratase large subunit from Campylobacter concisus (strain 13826).